Here is a 300-residue protein sequence, read N- to C-terminus: Formamidopyrimidine-DNA glycosylase (300 aa).

The active-site Schiff-base intermediate with DNA is proline 2. Glutamate 3 acts as the Proton donor in catalysis. The Proton donor; for beta-elimination activity role is filled by lysine 60. DNA is bound by residues histidine 108, arginine 136, and arginine 181. Residues 266–300 (WVYSRAGQPCRICNTPLEKIKLAGRSTHFCPQCQK) form an FPG-type zinc finger. The active-site Proton donor; for delta-elimination activity is the arginine 290.

Belongs to the FPG family. In terms of assembly, monomer. The cofactor is Zn(2+).

The enzyme catalyses Hydrolysis of DNA containing ring-opened 7-methylguanine residues, releasing 2,6-diamino-4-hydroxy-5-(N-methyl)formamidopyrimidine.. It catalyses the reaction 2'-deoxyribonucleotide-(2'-deoxyribose 5'-phosphate)-2'-deoxyribonucleotide-DNA = a 3'-end 2'-deoxyribonucleotide-(2,3-dehydro-2,3-deoxyribose 5'-phosphate)-DNA + a 5'-end 5'-phospho-2'-deoxyribonucleoside-DNA + H(+). Involved in base excision repair of DNA damaged by oxidation or by mutagenic agents. Acts as a DNA glycosylase that recognizes and removes damaged bases. Has a preference for oxidized purines, such as 7,8-dihydro-8-oxoguanine (8-oxoG). Has AP (apurinic/apyrimidinic) lyase activity and introduces nicks in the DNA strand. Cleaves the DNA backbone by beta-delta elimination to generate a single-strand break at the site of the removed base with both 3'- and 5'-phosphates. This chain is Formamidopyrimidine-DNA glycosylase, found in Trichodesmium erythraeum (strain IMS101).